We begin with the raw amino-acid sequence, 387 residues long: Succinate--CoA ligase [ADP-forming] subunit beta (387 aa).

One can recognise an ATP-grasp domain in the interval 9–236 (KELFAKHNVP…KDATDPLELK (228 aa)). ATP is bound by residues Lys-45, 52 to 54 (GRG), Ser-94, and Glu-99. Asn-191 and Asp-205 together coordinate Mg(2+). Residues Asn-256 and 318–320 (GIT) contribute to the substrate site.

Belongs to the succinate/malate CoA ligase beta subunit family. In terms of assembly, heterotetramer of two alpha and two beta subunits. Mg(2+) serves as cofactor.

It catalyses the reaction succinate + ATP + CoA = succinyl-CoA + ADP + phosphate. It carries out the reaction GTP + succinate + CoA = succinyl-CoA + GDP + phosphate. It functions in the pathway carbohydrate metabolism; tricarboxylic acid cycle; succinate from succinyl-CoA (ligase route): step 1/1. In terms of biological role, succinyl-CoA synthetase functions in the citric acid cycle (TCA), coupling the hydrolysis of succinyl-CoA to the synthesis of either ATP or GTP and thus represents the only step of substrate-level phosphorylation in the TCA. The beta subunit provides nucleotide specificity of the enzyme and binds the substrate succinate, while the binding sites for coenzyme A and phosphate are found in the alpha subunit. This is Succinate--CoA ligase [ADP-forming] subunit beta from Mycolicibacterium vanbaalenii (strain DSM 7251 / JCM 13017 / BCRC 16820 / KCTC 9966 / NRRL B-24157 / PYR-1) (Mycobacterium vanbaalenii).